The following is a 588-amino-acid chain: Aspartate--tRNA ligase (588 aa).

L-aspartate is bound at residue Glu-174. The tract at residues 198 to 201 (QLFK) is aspartate. L-aspartate is bound at residue Arg-220. Residues 220-222 (RDE) and Gln-229 each bind ATP. Residue His-448 participates in L-aspartate binding. Glu-482 is an ATP binding site. Arg-489 is a binding site for L-aspartate. 534–537 (GIDR) is a binding site for ATP.

The protein belongs to the class-II aminoacyl-tRNA synthetase family. Type 1 subfamily. Homodimer.

It is found in the cytoplasm. It catalyses the reaction tRNA(Asp) + L-aspartate + ATP = L-aspartyl-tRNA(Asp) + AMP + diphosphate. Functionally, catalyzes the attachment of L-aspartate to tRNA(Asp) in a two-step reaction: L-aspartate is first activated by ATP to form Asp-AMP and then transferred to the acceptor end of tRNA(Asp). The sequence is that of Aspartate--tRNA ligase from Xanthomonas oryzae pv. oryzae (strain MAFF 311018).